The sequence spans 62 residues: Protein DsrB (62 aa).

The protein belongs to the DsrB family.

This Enterobacter sp. (strain 638) protein is Protein DsrB.